We begin with the raw amino-acid sequence, 148 residues long: UPF0756 membrane protein NMA2160 (148 aa).

4 helical membrane passes run 13 to 35 (LILL…LLLM), 50 to 70 (HGLN…LVSG), 80 to 100 (FLNF…WLAG), and 121 to 141 (VIGV…AGIL).

The protein belongs to the UPF0756 family.

It is found in the cell membrane. This chain is UPF0756 membrane protein NMA2160, found in Neisseria meningitidis serogroup A / serotype 4A (strain DSM 15465 / Z2491).